We begin with the raw amino-acid sequence, 143 residues long: Nucleoside diphosphate kinase (143 aa).

The ATP site is built by K11, F59, R87, T93, R104, and N114. The Pros-phosphohistidine intermediate role is filled by H117.

The protein belongs to the NDK family. In terms of assembly, homotetramer. Mg(2+) is required as a cofactor.

Its subcellular location is the cytoplasm. The catalysed reaction is a 2'-deoxyribonucleoside 5'-diphosphate + ATP = a 2'-deoxyribonucleoside 5'-triphosphate + ADP. It catalyses the reaction a ribonucleoside 5'-diphosphate + ATP = a ribonucleoside 5'-triphosphate + ADP. Functionally, major role in the synthesis of nucleoside triphosphates other than ATP. The ATP gamma phosphate is transferred to the NDP beta phosphate via a ping-pong mechanism, using a phosphorylated active-site intermediate. This is Nucleoside diphosphate kinase from Colwellia psychrerythraea (strain 34H / ATCC BAA-681) (Vibrio psychroerythus).